Here is a 516-residue protein sequence, read N- to C-terminus: Probable malate:quinone oxidoreductase (516 aa).

The protein belongs to the MQO family. The cofactor is FAD.

It catalyses the reaction (S)-malate + a quinone = a quinol + oxaloacetate. It participates in carbohydrate metabolism; tricarboxylic acid cycle; oxaloacetate from (S)-malate (quinone route): step 1/1. The sequence is that of Probable malate:quinone oxidoreductase from Mycobacterium sp. (strain MCS).